A 271-amino-acid chain; its full sequence is Glutamate racemase (271 aa).

Residues 10–11 and 42–43 each bind substrate; these read DS and YG. Cys-73 functions as the Proton donor/acceptor in the catalytic mechanism. Residue 74–75 participates in substrate binding; that stretch reads NT. The active-site Proton donor/acceptor is Cys-183. Substrate is bound at residue 184–185; that stretch reads TH.

This sequence belongs to the aspartate/glutamate racemases family.

The catalysed reaction is L-glutamate = D-glutamate. It functions in the pathway cell wall biogenesis; peptidoglycan biosynthesis. Provides the (R)-glutamate required for cell wall biosynthesis. The chain is Glutamate racemase from Lactococcus lactis subsp. lactis (strain IL1403) (Streptococcus lactis).